The chain runs to 367 residues: Multifunctional tryptophan biosynthesis protein (367 aa).

The region spanning 7–201 (NVVMIDNYDS…LNVSGGYWEE (195 aa)) is the Glutamine amidotransferase type-1 domain. 58–60 (GPG) is an L-glutamine binding site. The Nucleophile; for GATase activity role is filled by cysteine 86. L-glutamine-binding positions include glutamine 90 and 136-137 (SL). Catalysis depends on for GATase activity residues histidine 175 and glutamate 177. Positions 209–367 (RKESILEKIY…TVLLIVKMLS (159 aa)) are indole-3-glycerol phosphate synthase.

As to quaternary structure, tetramer of two components I and two components II.

The enzyme catalyses chorismate + L-glutamine = anthranilate + pyruvate + L-glutamate + H(+). It carries out the reaction 1-(2-carboxyphenylamino)-1-deoxy-D-ribulose 5-phosphate + H(+) = (1S,2R)-1-C-(indol-3-yl)glycerol 3-phosphate + CO2 + H2O. The protein operates within amino-acid biosynthesis; L-tryptophan biosynthesis; L-tryptophan from chorismate: step 1/5. It functions in the pathway amino-acid biosynthesis; L-tryptophan biosynthesis; L-tryptophan from chorismate: step 4/5. This is Multifunctional tryptophan biosynthesis protein from Pichia angusta (Yeast).